The following is an 801-amino-acid chain: Probable inorganic carbon transporter subunit DabA (801 aa).

C298, D300, H481, and C496 together coordinate Zn(2+). Residues 575 to 596 (RENAAAERAESMGSDASSGVSE) are disordered.

It belongs to the inorganic carbon transporter (TC 9.A.2) DabA family. As to quaternary structure, forms a complex with DabB. It depends on Zn(2+) as a cofactor.

It localises to the cell membrane. Its function is as follows. Part of an energy-coupled inorganic carbon pump. The sequence is that of Probable inorganic carbon transporter subunit DabA from Haloarcula marismortui (strain ATCC 43049 / DSM 3752 / JCM 8966 / VKM B-1809) (Halobacterium marismortui).